The following is a 156-amino-acid chain: RNA pyrophosphohydrolase (156 aa).

The region spanning 6 to 148 is the Nudix hydrolase domain; it reads NYRPNVAAIV…KKNIYVRVIK (143 aa). The Nudix box motif lies at 43-64; sequence GGIDKGESVKNALFRELKEEIG.

It belongs to the Nudix hydrolase family. RppH subfamily. It depends on a divalent metal cation as a cofactor.

Accelerates the degradation of transcripts by removing pyrophosphate from the 5'-end of triphosphorylated RNA, leading to a more labile monophosphorylated state that can stimulate subsequent ribonuclease cleavage. The sequence is that of RNA pyrophosphohydrolase from Campylobacter jejuni subsp. jejuni serotype O:2 (strain ATCC 700819 / NCTC 11168).